The sequence spans 285 residues: NAD kinase (285 aa).

Catalysis depends on aspartate 68, which acts as the Proton acceptor. Residues 68–69 (DG), 142–143 (ND), arginine 153, lysine 170, aspartate 172, and glutamine 242 each bind NAD(+).

It belongs to the NAD kinase family. The cofactor is a divalent metal cation.

It localises to the cytoplasm. It carries out the reaction NAD(+) + ATP = ADP + NADP(+) + H(+). Its function is as follows. Involved in the regulation of the intracellular balance of NAD and NADP, and is a key enzyme in the biosynthesis of NADP. Catalyzes specifically the phosphorylation on 2'-hydroxyl of the adenosine moiety of NAD to yield NADP. This Koribacter versatilis (strain Ellin345) protein is NAD kinase.